A 187-amino-acid chain; its full sequence is Aspartic protease inhibitor 9 (187 aa).

N-linked (GlcNAc...) asparagine glycosylation occurs at Asn-19. 2 cysteine pairs are disulfide-bonded: Cys-48/Cys-93 and Cys-142/Cys-158.

It belongs to the protease inhibitor I3 (leguminous Kunitz-type inhibitor) family. Post-translationally, glycosylated. In terms of tissue distribution, tubers.

The protein localises to the vacuole. Its function is as follows. Inhibitor of cathepsin D (aspartic protease) and trypsin (serine protease). May protect the plant by inhibiting proteases of invading organisms. The sequence is that of Aspartic protease inhibitor 9 from Solanum tuberosum (Potato).